Here is a 608-residue protein sequence, read N- to C-terminus: Pentatricopeptide repeat-containing protein At5g40410, mitochondrial (608 aa).

Residues 1-28 (MIKANVYSCSKFRFLYRRRFLSQSSFVH) constitute a mitochondrion transit peptide. PPR repeat units lie at residues 30–64 (LDAN…VSYR), 65–95 (HGFI…MPER), 96–130 (DLVS…EVGF), 133–167 (NEVT…GVLE), 168–198 (EVKV…LSIK), 199–233 (NLVS…GHEP), 234–268 (DQAT…GFSG), 269–299 (NKCI…ITSP), 300–334 (DSMA…GISP), 335–365 (DHVT…MSKR), and 371–401 (RLDH…MPME). Residues 406–481 (VWGALLGACR…ASGCSYIEHG (76 aa)) are type E motif. A type E(+) motif region spans residues 482 to 512 (NKIHKFVVGDWSHPESEKIQKKLKEIRKKMK). Residues 514–608 (EMGYKSKTEF…DGSCSCSDYW (95 aa)) form a type DYW motif region.

This sequence belongs to the PPR family. PCMP-H subfamily.

It is found in the mitochondrion. The sequence is that of Pentatricopeptide repeat-containing protein At5g40410, mitochondrial (PCMP-H15) from Arabidopsis thaliana (Mouse-ear cress).